A 337-amino-acid chain; its full sequence is MGFNEIVDFFYRLAEAGDKLREEGVWLAYGPEKLPEALEKPVNGTVAVKLGFPIYQKGGVVMDVTNVEQAGIAEDAGAVAVMVLDKLPYDVRKAGGVARMADVKVIEQVMSSITIPVMAKVRIGHYYEAMILESIGVDMIDESEVLTPVDEKHHINKWLFKVPFVNGARSLAEALRRIAEGASMIRTKGEAGTGNVAEAVRHMKLIMGDIWRLRGLSAEERLRVAREYGVPHQLVDLTARLGRLPVVNFAAGGIATPADAALMMWLGADGVFVGSGIFKSSDPSERAAAIVLATSMWDDPEAVAEAQRMVSEAKSMMGIDIRKLSPEELLQVRGAEA.

Asp63 contacts D-ribose 5-phosphate. Residue Lys120 is the Schiff-base intermediate with D-ribose 5-phosphate of the active site. Position 192 (Gly192) interacts with D-ribose 5-phosphate. A D-glyceraldehyde 3-phosphate-binding site is contributed by Lys204. D-ribose 5-phosphate is bound by residues Gly253 and 274-275 (GS).

This sequence belongs to the PdxS/SNZ family. As to quaternary structure, in the presence of PdxT, forms a dodecamer of heterodimers.

It catalyses the reaction aldehydo-D-ribose 5-phosphate + D-glyceraldehyde 3-phosphate + L-glutamine = pyridoxal 5'-phosphate + L-glutamate + phosphate + 3 H2O + H(+). It participates in cofactor biosynthesis; pyridoxal 5'-phosphate biosynthesis. In terms of biological role, catalyzes the formation of pyridoxal 5'-phosphate from ribose 5-phosphate (RBP), glyceraldehyde 3-phosphate (G3P) and ammonia. The ammonia is provided by the PdxT subunit. Can also use ribulose 5-phosphate and dihydroxyacetone phosphate as substrates, resulting from enzyme-catalyzed isomerization of RBP and G3P, respectively. This is Pyridoxal 5'-phosphate synthase subunit PdxS from Aeropyrum pernix (strain ATCC 700893 / DSM 11879 / JCM 9820 / NBRC 100138 / K1).